Consider the following 1547-residue polypeptide: Tubby-related protein 4 (1547 aa).

WD repeat units follow at residues 80–119 (GHNSEVVLVRWNEPYQKLATCDADGGIFVWIQYEGRWSVE), 123–162 (DRGAQVSDFTWSHDGTQALISYRDGFVLVGSVSGQRHWSS), and 165–204 (NLESQITCGIWTPDDQQVLFGTADGQVIVMDCHGRMLAHV). In terms of domain architecture, SOCS box spans 364 to 414 (ALYVVRVEHRVSSLQLLCQQAIASTLREDKDVNKLTLPPRLCSYLSTAFIP). Residues 530 to 580 (SPKISRSSKSPKLPRISIEARKSPKLPRAAQEISRSPRLPMRKPSMGSPSL) form a disordered region. Residues 533-546 (ISRSSKSPKLPRIS) show a composition bias toward low complexity. Serine 577 bears the Phosphoserine mark. 2 positions are modified to asymmetric dimethylarginine: arginine 949 and arginine 954. Phosphoserine is present on residues serine 1347 and serine 1378. The segment at 1374–1414 (SLISSPRLGREKKKVKSQKDQLKSKKLNKTNEFQDSSESEP) is disordered. The segment at 1436–1547 (SKRSLRTASE…ALANVTQRLK (112 aa)) is TUB.

It belongs to the TUB family.

The protein resides in the cytoplasm. It functions in the pathway protein modification; protein ubiquitination. In terms of biological role, may be a substrate-recognition component of a SCF-like ECS (Elongin-Cullin-SOCS-box protein) E3 ubiquitin ligase complex which mediates the ubiquitination and subsequent proteasomal degradation of target proteins. The protein is Tubby-related protein 4 (Tulp4) of Mus musculus (Mouse).